A 313-amino-acid chain; its full sequence is Ribosomal RNA small subunit methyltransferase H (313 aa).

S-adenosyl-L-methionine is bound by residues 35-37 (GGH), D55, F79, D101, and Q108.

It belongs to the methyltransferase superfamily. RsmH family.

The protein localises to the cytoplasm. It carries out the reaction cytidine(1402) in 16S rRNA + S-adenosyl-L-methionine = N(4)-methylcytidine(1402) in 16S rRNA + S-adenosyl-L-homocysteine + H(+). In terms of biological role, specifically methylates the N4 position of cytidine in position 1402 (C1402) of 16S rRNA. In Shigella sonnei (strain Ss046), this protein is Ribosomal RNA small subunit methyltransferase H.